We begin with the raw amino-acid sequence, 419 residues long: Serine hydroxymethyltransferase (419 aa).

Residues Leu-121 and 125–127 (GHL) contribute to the (6S)-5,6,7,8-tetrahydrofolate site. Lys-230 is modified (N6-(pyridoxal phosphate)lysine). 355-357 (SPF) contributes to the (6S)-5,6,7,8-tetrahydrofolate binding site.

The protein belongs to the SHMT family. As to quaternary structure, homodimer. Pyridoxal 5'-phosphate is required as a cofactor.

The protein localises to the cytoplasm. The enzyme catalyses (6R)-5,10-methylene-5,6,7,8-tetrahydrofolate + glycine + H2O = (6S)-5,6,7,8-tetrahydrofolate + L-serine. The protein operates within one-carbon metabolism; tetrahydrofolate interconversion. It functions in the pathway amino-acid biosynthesis; glycine biosynthesis; glycine from L-serine: step 1/1. In terms of biological role, catalyzes the reversible interconversion of serine and glycine with tetrahydrofolate (THF) serving as the one-carbon carrier. This reaction serves as the major source of one-carbon groups required for the biosynthesis of purines, thymidylate, methionine, and other important biomolecules. Also exhibits THF-independent aldolase activity toward beta-hydroxyamino acids, producing glycine and aldehydes, via a retro-aldol mechanism. This is Serine hydroxymethyltransferase from Streptococcus equi subsp. equi (strain 4047).